The chain runs to 246 residues: NH(3)-dependent NAD(+) synthetase (246 aa).

Residue 29 to 36 (GLSGGIDS) participates in ATP binding. Residue aspartate 35 participates in Mg(2+) binding. A deamido-NAD(+)-binding site is contributed by arginine 110. ATP is bound at residue threonine 130. Glutamate 135 provides a ligand contact to Mg(2+). Residues lysine 159 and serine 181 each contribute to the ATP site.

This sequence belongs to the NAD synthetase family. Homodimer.

The enzyme catalyses deamido-NAD(+) + NH4(+) + ATP = AMP + diphosphate + NAD(+) + H(+). The protein operates within cofactor biosynthesis; NAD(+) biosynthesis; NAD(+) from deamido-NAD(+) (ammonia route): step 1/1. Functionally, catalyzes the ATP-dependent amidation of deamido-NAD to form NAD. Uses ammonia as a nitrogen source. This is NH(3)-dependent NAD(+) synthetase from Campylobacter jejuni subsp. jejuni serotype O:2 (strain ATCC 700819 / NCTC 11168).